The primary structure comprises 488 residues: Cis-aconitate decarboxylase (488 aa).

Belongs to the PrpD family. As to quaternary structure, homodimer. Expressed in LPS-tolerized macrophages (at protein level). Expressed in the luminal epithelial cells of pregnant uterus. Expressed in microglia and macrophage cells.

It localises to the mitochondrion. It carries out the reaction cis-aconitate + H(+) = itaconate + CO2. Functionally, cis-aconitate decarboxylase that catalyzes production of itaconate and is involved in the inhibition of the inflammatory response. Acts as a negative regulator of the Toll-like receptors (TLRs)-mediated inflammatory innate response by stimulating the tumor necrosis factor alpha-induced protein TNFAIP3 expression via reactive oxygen species (ROS) in LPS-tolerized macrophages. Involved in antimicrobial response of innate immune cells; ACOD1-mediated itaconic acid production contributes to the antimicrobial activity of macrophages by generating itaconate, leading to alkylation of proteins, such as TFEB. Involved in antiviral response following infection by flavivirus in neurons: ACOD1-mediated itaconate production inhibits the activity of succinate dehydrogenase, generating a metabolic state in neurons that suppresses replication of viral genomes. Plays a role in the embryo implantation. The chain is Cis-aconitate decarboxylase from Mus musculus (Mouse).